We begin with the raw amino-acid sequence, 179 residues long: Protein GrpE (179 aa).

This sequence belongs to the GrpE family. In terms of assembly, homodimer.

The protein resides in the cytoplasm. In terms of biological role, participates actively in the response to hyperosmotic and heat shock by preventing the aggregation of stress-denatured proteins, in association with DnaK and GrpE. It is the nucleotide exchange factor for DnaK and may function as a thermosensor. Unfolded proteins bind initially to DnaJ; upon interaction with the DnaJ-bound protein, DnaK hydrolyzes its bound ATP, resulting in the formation of a stable complex. GrpE releases ADP from DnaK; ATP binding to DnaK triggers the release of the substrate protein, thus completing the reaction cycle. Several rounds of ATP-dependent interactions between DnaJ, DnaK and GrpE are required for fully efficient folding. The chain is Protein GrpE from Rickettsia felis (strain ATCC VR-1525 / URRWXCal2) (Rickettsia azadi).